Consider the following 267-residue polypeptide: MSDILQKILAVKAEEVAAARKHRDLPSVRAEAEANRSDSTLRARGFARAMRDKIAAGNAAVIAEVKKASPSKGVLRPNFKPADIARSYAEHGAACLSVLTDEQFFQGHADYLREARAACTLPVLRKDFMVDLYQVYEARSWGADCILLIVAALDQGLMEELEACALELGMDVLVEVHDGHELDRALRLQTPLVGVNNRNLRTFETTLDTTLGLLKHMPDDRIVVTESGILTPDDVRKMRAAAVNAFLVGEAFMRADDPGAELARLFA.

Belongs to the TrpC family.

It carries out the reaction 1-(2-carboxyphenylamino)-1-deoxy-D-ribulose 5-phosphate + H(+) = (1S,2R)-1-C-(indol-3-yl)glycerol 3-phosphate + CO2 + H2O. The protein operates within amino-acid biosynthesis; L-tryptophan biosynthesis; L-tryptophan from chorismate: step 4/5. The polypeptide is Indole-3-glycerol phosphate synthase (Ralstonia pickettii (strain 12J)).